Consider the following 296-residue polypeptide: MFGAFVSHRLWSDSGCTTTCIANSIANYVAFGEQIEFPFKSAQVFIAGPRKAVINIQEEDKAELSKMIAKHNLWVVAHGTYLDVPWSSRSAFVTHFIHQELLICKEVGIKGLVLHLGAVEPELIVEGLKKIKPVEEVVIYLETPHNKHHAYKYSTIEQIKELFLRIRNSRLKHIGLCIDTAHIWSSGVNISGYNDAGQWLRSLENIHSVIPPSHIMFHLNDAATECGSGIDRHASLFEGMIWKSYSHKIKHSGLYCFVEYITRHQCPAILERNLGSSMQLQTALTTEFHTLKSLLK.

A disulfide bridge links C16 with C20. Positions 78, 115, 142, 182, 218, 231, 233, and 271 each coordinate Zn(2+).

Belongs to the AP endonuclease 2 family. Zn(2+) is required as a cofactor.

The protein localises to the host nucleus. It localises to the host cytoplasm. The protein resides in the virion. Its function is as follows. Endonuclease of the viral base excision repair system that catalyzes DNA cleavage reaction at the apurinic or apyrimidinic sites (AP sites). Cleaves phosphodiester bonds on the 5' side of AP sites. In addition to endonuclease activity, the AP endonuclease has a proofreading 3'-5' exonuclease activity that is considerably more efficient in the elimination of a mismatch than in that of a correctly paired base. Displays 3'-phosphatase and 3'-repair diesterase activities. The single nucleotide gaps generated by the AP endonuclease are filled by the viral repair DNA polymerase X and the DNA ligase. The protein is Probable AP endonuclease of Ornithodoros (relapsing fever ticks).